Reading from the N-terminus, the 591-residue chain is Aspartate--tRNA(Asp/Asn) ligase (591 aa).

An L-aspartate-binding site is contributed by Glu-176. Residues 200–203 (QLFK) are aspartate. An L-aspartate-binding site is contributed by Arg-222. ATP-binding positions include 222–224 (RDE) and Gln-231. Position 450 (His-450) interacts with L-aspartate. Glu-484 is a binding site for ATP. Arg-491 contributes to the L-aspartate binding site. 536 to 539 (GLDR) contacts ATP.

This sequence belongs to the class-II aminoacyl-tRNA synthetase family. Type 1 subfamily. As to quaternary structure, homodimer.

It localises to the cytoplasm. It carries out the reaction tRNA(Asx) + L-aspartate + ATP = L-aspartyl-tRNA(Asx) + AMP + diphosphate. In terms of biological role, aspartyl-tRNA synthetase with relaxed tRNA specificity since it is able to aspartylate not only its cognate tRNA(Asp) but also tRNA(Asn). Reaction proceeds in two steps: L-aspartate is first activated by ATP to form Asp-AMP and then transferred to the acceptor end of tRNA(Asp/Asn). This chain is Aspartate--tRNA(Asp/Asn) ligase, found in Bacillus cereus (strain B4264).